Reading from the N-terminus, the 637-residue chain is Probable potassium transport system protein Kup (637 aa).

12 helical membrane-spanning segments follow: residues 24 to 44 (LAIAAIGVVFGDIGTSPLYAL), 64 to 84 (VISLLFWAIILVVGIKYLLFV), 113 to 133 (AGALMALGIFGACMFYGDAVI), 151 to 171 (PHLSHLVLPITIVILIALFWI), 182 to 202 (LFGPIMVVWFVVIAALGVYHI), 225 to 245 (LLQAYVVLGSVVLVLTGAEAL), 261 to 281 (AYGLVMPSLVLNYFGQGALLI), 290 to 310 (PFFLLAPEWALLPLVVLSTVA), 351 to 371 (IYVPVVNWLLLFVILCIVIGF), 381 to 401 (YGIAVTATMVITTVLACVVMV), 409 to 429 (LLVGAIIAIFLAIDLGFFGAN), and 433 to 453 (VAQGGWLPLGIGALLFFLLMT).

The protein belongs to the HAK/KUP transporter (TC 2.A.72) family.

It localises to the cell inner membrane. It carries out the reaction K(+)(in) + H(+)(in) = K(+)(out) + H(+)(out). Functionally, transport of potassium into the cell. Likely operates as a K(+):H(+) symporter. The protein is Probable potassium transport system protein Kup of Burkholderia ambifaria (strain MC40-6).